We begin with the raw amino-acid sequence, 342 residues long: Heat-inducible transcription repressor HrcA (342 aa).

Belongs to the HrcA family.

Negative regulator of class I heat shock genes (grpE-dnaK-dnaJ and groELS operons). Prevents heat-shock induction of these operons. The chain is Heat-inducible transcription repressor HrcA from Leptospira interrogans serogroup Icterohaemorrhagiae serovar copenhageni (strain Fiocruz L1-130).